Here is a 96-residue protein sequence, read N- to C-terminus: Co-chaperonin GroES (96 aa).

It belongs to the GroES chaperonin family. In terms of assembly, heptamer of 7 subunits arranged in a ring. Interacts with the chaperonin GroEL.

The protein resides in the cytoplasm. In terms of biological role, together with the chaperonin GroEL, plays an essential role in assisting protein folding. The GroEL-GroES system forms a nano-cage that allows encapsulation of the non-native substrate proteins and provides a physical environment optimized to promote and accelerate protein folding. GroES binds to the apical surface of the GroEL ring, thereby capping the opening of the GroEL channel. The protein is Co-chaperonin GroES of Shewanella pealeana (strain ATCC 700345 / ANG-SQ1).